A 112-amino-acid chain; its full sequence is Large ribosomal subunit protein uL22 (112 aa).

This sequence belongs to the universal ribosomal protein uL22 family. As to quaternary structure, part of the 50S ribosomal subunit.

Functionally, this protein binds specifically to 23S rRNA; its binding is stimulated by other ribosomal proteins, e.g. L4, L17, and L20. It is important during the early stages of 50S assembly. It makes multiple contacts with different domains of the 23S rRNA in the assembled 50S subunit and ribosome. Its function is as follows. The globular domain of the protein is located near the polypeptide exit tunnel on the outside of the subunit, while an extended beta-hairpin is found that lines the wall of the exit tunnel in the center of the 70S ribosome. This Mesoplasma florum (strain ATCC 33453 / NBRC 100688 / NCTC 11704 / L1) (Acholeplasma florum) protein is Large ribosomal subunit protein uL22.